A 143-amino-acid chain; its full sequence is Small ribosomal subunit protein uS12 (143 aa).

A compositionally biased stretch (basic residues) spans 1 to 20; the sequence is MGKCRGLRTARKLRSHRRDQ. Residues 1 to 26 are disordered; sequence MGKCRGLRTARKLRSHRRDQKWHDKQ. Lys37 is covalently cross-linked (Glycyl lysine isopeptide (Lys-Gly) (interchain with G-Cter in SUMO2)). Residue Lys54 is modified to N6-succinyllysine. The residue at position 62 (Pro62) is a 3-hydroxyproline. Lys135 is modified (N6-acetyllysine).

Belongs to the universal ribosomal protein uS12 family. Component of the 40S small ribosomal subunit. Part of the small subunit (SSU) processome, composed of more than 70 proteins and the RNA chaperone small nucleolar RNA (snoRNA) U3. Post-translationally, hydroxylation at Pro-62 affects translation termination efficiency.

It localises to the cytoplasm. Its subcellular location is the cytosol. It is found in the rough endoplasmic reticulum. The protein localises to the nucleus. The protein resides in the nucleolus. Functionally, component of the ribosome, a large ribonucleoprotein complex responsible for the synthesis of proteins in the cell. The small ribosomal subunit (SSU) binds messenger RNAs (mRNAs) and translates the encoded message by selecting cognate aminoacyl-transfer RNA (tRNA) molecules. The large subunit (LSU) contains the ribosomal catalytic site termed the peptidyl transferase center (PTC), which catalyzes the formation of peptide bonds, thereby polymerizing the amino acids delivered by tRNAs into a polypeptide chain. The nascent polypeptides leave the ribosome through a tunnel in the LSU and interact with protein factors that function in enzymatic processing, targeting, and the membrane insertion of nascent chains at the exit of the ribosomal tunnel. Plays an important role in translational accuracy. Part of the small subunit (SSU) processome, first precursor of the small eukaryotic ribosomal subunit. During the assembly of the SSU processome in the nucleolus, many ribosome biogenesis factors, an RNA chaperone and ribosomal proteins associate with the nascent pre-rRNA and work in concert to generate RNA folding, modifications, rearrangements and cleavage as well as targeted degradation of pre-ribosomal RNA by the RNA exosome. The sequence is that of Small ribosomal subunit protein uS12 (RPS23) from Bos taurus (Bovine).